We begin with the raw amino-acid sequence, 433 residues long: MILQPSALLCLSSLWGVIVQASQGQFPVTQNVTVVEGGTINLTCRVDQNDNTSLQWSNPAQQTLYFDDKKALRDNRIELVRASWHELSISISDVSLSDEGQYTCSLFTMPVKTSKAYLMVLGVPENPHISGFTSPVMEGDTIQLTCKSSGSKPAADIRWFKNDQEITDVQKIQQQDSNGKTFTVTSSLVFQGDRKDDGAVIRCRVDHESLTSTPQIAKQVLEIHYTPTVRILPSTPLPQEGQPLILICESKGKPLPEPVLWTKDGGELPDPERMTVNGRELTISFLNKTDNGTYRCEATNSIGQSSAEYVLIINDVPKPLFPTTIIPLFTSATVKTNVAMSTRTTKSAFITKDPNALPGPVATDHALIGGVVAVVVFVTLCSIILIGRYLARHKGTYLTNEAKGAEDAPDADTAIINAEGSQVNAEEKKEYFI.

The N-terminal stretch at 1–24 (MILQPSALLCLSSLWGVIVQASQG) is a signal peptide. Topologically, residues 25-365 (QFPVTQNVTV…ALPGPVATDH (341 aa)) are extracellular. The Ig-like V-type domain occupies 27 to 114 (PVTQNVTVVE…SLFTMPVKTS (88 aa)). 3 N-linked (GlcNAc...) asparagine glycosylation sites follow: Asn-31, Asn-41, and Asn-51. Cystine bridges form between Cys-44-Cys-104, Cys-146-Cys-203, and Cys-248-Cys-296. 2 Ig-like C2-type domains span residues 127-217 (PHIS…PQIA) and 227-312 (PTVR…YVLI). N-linked (GlcNAc...) asparagine glycosylation is found at Asn-287 and Asn-291. A helical transmembrane segment spans residues 366–386 (ALIGGVVAVVVFVTLCSIILI). Residues 387–433 (GRYLARHKGTYLTNEAKGAEDAPDADTAIINAEGSQVNAEEKKEYFI) lie on the Cytoplasmic side of the membrane.

The protein belongs to the nectin family.

It localises to the membrane. In Xenopus tropicalis (Western clawed frog), this protein is Cell adhesion molecule 2 (cadm2).